The sequence spans 388 residues: Palmitoyltransferase ZDHHC18 (388 aa).

The segment at 1 to 67 is disordered; it reads MKDCEYQQIS…GSGSLGRRPR (67 aa). Over 1–90 the chain is Cytoplasmic; sequence MKDCEYQQIS…CGGRLMLAGH (90 aa). A compositionally biased stretch (low complexity) spans 10–27; it reads SPGAAPLPASPGARRPGP. The residue at position 19 (S19) is a Phosphoserine. Pro residues predominate over residues 28–46; the sequence is AASPTPGPGPAPPAAPAPP. A helical membrane pass occupies residues 91–111; that stretch reads GGVFALTLLLILTTTGLFFVF. Residues 112–119 lie on the Lumenal side of the membrane; it reads DCPYLARK. Residues 120-140 traverse the membrane as a helical segment; the sequence is LTLAIPIIAAILFFFVMSCLL. The Cytoplasmic segment spans residues 141-235; it reads QTSFTDPGIL…GNCVGRRNYR (95 aa). The 51-residue stretch at 192-242 folds into the DHHC domain; that stretch reads KYCFTCKMFRPPRTSHCSVCDNCVERFDHHCPWVGNCVGRRNYRFFYAFIL. C222 (S-palmitoyl cysteine intermediate) is an active-site residue. A helical membrane pass occupies residues 236-256; sequence FFYAFILSLSFLTAFIFACVV. The Lumenal segment spans residues 257-277; sequence THLTLRAQGSNFLSTLKETPA. A helical transmembrane segment spans residues 278–298; the sequence is SVLELVICFFSIWSILGLSGF. At 299-388 the chain is on the cytoplasmic side; the sequence is HTYLVASNLT…PDASMVGGHP (90 aa). Positions 364–388 are disordered; that stretch reads LPSPIRSDEPACRAKPDASMVGGHP. The span at 369–379 shows a compositional bias: basic and acidic residues; that stretch reads RSDEPACRAKP.

This sequence belongs to the DHHC palmitoyltransferase family. ERF2/ZDHHC9 subfamily. Widely expressed.

Its subcellular location is the golgi apparatus membrane. The enzyme catalyses L-cysteinyl-[protein] + hexadecanoyl-CoA = S-hexadecanoyl-L-cysteinyl-[protein] + CoA. Palmitoyltransferase that catalyzes the addition of palmitate onto various protein substrates, such as CGAS, HRAS and LCK. Acts as a negative regulator of the cGAS-STING pathway be mediating palmitoylation and inactivation of CGAS. May also have a palmitoyltransferase activity toward the beta-2 adrenergic receptor/ADRB2 and therefore regulate G protein-coupled receptor signaling. In Homo sapiens (Human), this protein is Palmitoyltransferase ZDHHC18.